The following is a 95-amino-acid chain: Pyrimidine/purine nucleoside phosphorylase (95 aa).

Belongs to the nucleoside phosphorylase PpnP family.

The enzyme catalyses a purine D-ribonucleoside + phosphate = a purine nucleobase + alpha-D-ribose 1-phosphate. It catalyses the reaction adenosine + phosphate = alpha-D-ribose 1-phosphate + adenine. It carries out the reaction cytidine + phosphate = cytosine + alpha-D-ribose 1-phosphate. The catalysed reaction is guanosine + phosphate = alpha-D-ribose 1-phosphate + guanine. The enzyme catalyses inosine + phosphate = alpha-D-ribose 1-phosphate + hypoxanthine. It catalyses the reaction thymidine + phosphate = 2-deoxy-alpha-D-ribose 1-phosphate + thymine. It carries out the reaction uridine + phosphate = alpha-D-ribose 1-phosphate + uracil. The catalysed reaction is xanthosine + phosphate = alpha-D-ribose 1-phosphate + xanthine. Its function is as follows. Catalyzes the phosphorolysis of diverse nucleosides, yielding D-ribose 1-phosphate and the respective free bases. Can use uridine, adenosine, guanosine, cytidine, thymidine, inosine and xanthosine as substrates. Also catalyzes the reverse reactions. This Yersinia enterocolitica serotype O:8 / biotype 1B (strain NCTC 13174 / 8081) protein is Pyrimidine/purine nucleoside phosphorylase.